The primary structure comprises 1309 residues: Mediator of RNA polymerase II transcription subunit 33A (1309 aa).

The interval 809-829 (QTLNPVNSGTSSSSGAASEDS) is disordered. Residues 816–826 (SGTSSSSGAAS) are compositionally biased toward low complexity.

This sequence belongs to the Mediator complex subunit 33 family. As to quaternary structure, component of the Mediator complex.

It localises to the nucleus. Functionally, component of the Mediator complex, a coactivator involved in the regulated transcription of nearly all RNA polymerase II-dependent genes. Mediator functions as a bridge to convey information from gene-specific regulatory proteins to the basal RNA polymerase II transcription machinery. The Mediator complex, having a compact conformation in its free form, is recruited to promoters by direct interactions with regulatory proteins and serves for the assembly of a functional preinitiation complex with RNA polymerase II and the general transcription factors. Involved in the repression of phenylpropanoid biosynthesis. May compete with MED33B for common binding partners or for occupancy in Mediator. This is Mediator of RNA polymerase II transcription subunit 33A (MED33A) from Arabidopsis thaliana (Mouse-ear cress).